A 128-amino-acid polypeptide reads, in one-letter code: Insulin-like growth factor 2 (128 aa).

Positions 1-24 (MGISMGKSMLVLLTFLAFASCCIA) are cleaved as a signal peptide. Residues 25–52 (AYRPSETLCGGELVDTLQFVCGDRGFYF) form a b region. Intrachain disulfides connect C33–C71, C45–C84, and C70–C75. The interval 53 to 64 (SRPASRVSRRSR) is c. The a stretch occupies residues 65 to 85 (GIVEECCFRSCDLALLETYCA). The segment at 86 to 91 (TPAKSE) is d. Positions 92-128 (RDVSASLAVLPDNFPRYPVGKFFQYDTWRQSTQRLRR) are cleaved as a propeptide — e peptide.

This sequence belongs to the insulin family. Interacts with MYORG; this interaction is required for IGF2 secretion. Interacts with integrins ITGAV:ITGB3 and ITGA6:ITGB4; integrin-binding is required for IGF2 signaling. In terms of processing, proteolytically processed by PCSK4, proIGF2 is cleaved at Arg-128 and Arg-92 to generate big-IGF2 and mature IGF2.

The protein resides in the secreted. In terms of biological role, the insulin-like growth factors possess growth-promoting activity. Major fetal growth hormone in mammals. Plays a key role in regulating fetoplacental development. IGF2 is influenced by placental lactogen. Also involved in tissue differentiation. In adults, involved in glucose metabolism in adipose tissue, skeletal muscle and liver. Acts as a ligand for integrin which is required for IGF2 signaling. Positively regulates myogenic transcription factor MYOD1 function by facilitating the recruitment of transcriptional coactivators, thereby controlling muscle terminal differentiation. Inhibits myoblast differentiation and metabolism via increasing the mitochondrial respiration rate. Preptin undergoes glucose-mediated co-secretion with insulin, and acts as a physiological amplifier of glucose-mediated insulin secretion. Exhibits osteogenic properties by increasing osteoblast mitogenic activity through phosphoactivation of MAPK1 and MAPK3. This Cavia porcellus (Guinea pig) protein is Insulin-like growth factor 2.